The chain runs to 236 residues: GLIPR1-like protein 1 (236 aa).

An N-terminal signal peptide occupies residues 1 to 27; that stretch reads MALKKKLNFLWTLVLYLIASRLPKAFG. The 133-residue stretch at 46–178 folds into the SCP domain; that stretch reads LNIHNELRRK…FSAGLFVCNY (133 aa). A glycan (N-linked (GlcNAc...) asparagine) is linked at asparagine 126.

It belongs to the CRISP family. As to quaternary structure, part of a oolemmal binding multimeric complex (IZUMO1 complex) composed at least of IZUMO1 and GLIPR1L1; the complex assemblage is influenced by the maturation status of the male germ cell. Interacts with IZUMO1. In terms of processing, N-glycosylated. N-glycosylation decreases during the transit in the caput. In terms of tissue distribution, expressed in testis (at protein level). Little or no expression in other tissues tested.

Its subcellular location is the cytoplasmic vesicle. It is found in the secretory vesicle. The protein resides in the acrosome. The protein localises to the cell membrane. It localises to the membrane raft. Its subcellular location is the secreted. Its function is as follows. Required for optimal fertilization at the stage of sperm-oocyte fusion, plays a role in optimizing acrosome function, the translocation of IZUMO1 during the acrosome reaction and the fertilization process. Component of epididymosomes, one type of membranous microvesicules which mediate the transfer of lipids and proteins to spermatozoa plasma membrane during epididymal maturation. Also component of the CD9-positive microvesicules found in the cauda region. The protein is GLIPR1-like protein 1 of Mus musculus (Mouse).